A 129-amino-acid polypeptide reads, in one-letter code: uncharacterized protein (129 aa).

Residues 86–96 show a composition bias toward acidic residues; it reads NDGFSSDDEPE. A disordered region spans residues 86-129; sequence NDGFSSDDEPEEHVILTEDNQGEPSETPQATFDITEFIKTEDED. The span at 103–117 shows a compositional bias: polar residues; the sequence is EDNQGEPSETPQATF.

The protein belongs to the asfivirus D129L family.

This is an uncharacterized protein from African swine fever virus (isolate Tick/South Africa/Pretoriuskop Pr4/1996) (ASFV).